The primary structure comprises 554 residues: Malate synthase 1 (554 aa).

R177 serves as the catalytic Proton acceptor. D457 functions as the Proton donor in the catalytic mechanism. The short motif at 552–554 (SKL) is the SKL peroxisome targeting motif element.

This sequence belongs to the malate synthase family. In terms of assembly, interacts with PEX9.

It is found in the peroxisome matrix. It catalyses the reaction glyoxylate + acetyl-CoA + H2O = (S)-malate + CoA + H(+). It functions in the pathway carbohydrate metabolism; glyoxylate cycle; (S)-malate from isocitrate: step 2/2. Its function is as follows. Malate synthase which takes part in the glyoxylate cycle. MLS1 activity is essential for cells to grow on oleic acid as a sole carbon source. Two steps of the glyoxylate cycle take place in the cytosol, the splitting of isocitrate into succinate and glyoxylate, and the dehydrogenation of malate to oxaloacetate. However, the formation of malate from glyoxylate and acetyl-CoA undertaken MLS1, occurs in the peroxisomes when cells are grown on oleic acid. The source of acetyl-CoA being either peroxisomal when breaking down fatty acids, or cytosolic when extra-cellular two-carbon substrates are used, therefore, although not strictly essential, the peroxisomal localization of MLS1 appears to be advantageous for cells growing on oleic acid, in that acetyl-CoA production and utilization are thereby intimately compartmentalized together to increase efficiency. The chain is Malate synthase 1 from Saccharomyces cerevisiae (strain YJM789) (Baker's yeast).